The following is a 340-amino-acid chain: Ketol-acid reductoisomerase (NADP(+)) (340 aa).

In terms of domain architecture, KARI N-terminal Rossmann spans 1–183; the sequence is MAITVYYDKD…GGGRTGIIET (183 aa). Residues 26–29, Arg-49, Ser-52, Ser-54, and 84–87 contribute to the NADP(+) site; these read FGSQ and DEIQ. His-109 is an active-site residue. Position 135 (Gly-135) interacts with NADP(+). Positions 184 to 329 constitute a KARI C-terminal knotted domain; it reads TFKAETETDL…RNLRAMMPWI (146 aa). The Mg(2+) site is built by Asp-192, Glu-196, Glu-228, and Glu-232. Ser-253 serves as a coordination point for substrate.

The protein belongs to the ketol-acid reductoisomerase family. It depends on Mg(2+) as a cofactor.

It carries out the reaction (2R)-2,3-dihydroxy-3-methylbutanoate + NADP(+) = (2S)-2-acetolactate + NADPH + H(+). The enzyme catalyses (2R,3R)-2,3-dihydroxy-3-methylpentanoate + NADP(+) = (S)-2-ethyl-2-hydroxy-3-oxobutanoate + NADPH + H(+). It participates in amino-acid biosynthesis; L-isoleucine biosynthesis; L-isoleucine from 2-oxobutanoate: step 2/4. The protein operates within amino-acid biosynthesis; L-valine biosynthesis; L-valine from pyruvate: step 2/4. Involved in the biosynthesis of branched-chain amino acids (BCAA). Catalyzes an alkyl-migration followed by a ketol-acid reduction of (S)-2-acetolactate (S2AL) to yield (R)-2,3-dihydroxy-isovalerate. In the isomerase reaction, S2AL is rearranged via a Mg-dependent methyl migration to produce 3-hydroxy-3-methyl-2-ketobutyrate (HMKB). In the reductase reaction, this 2-ketoacid undergoes a metal-dependent reduction by NADPH to yield (R)-2,3-dihydroxy-isovalerate. This chain is Ketol-acid reductoisomerase (NADP(+)), found in Campylobacter jejuni subsp. jejuni serotype O:2 (strain ATCC 700819 / NCTC 11168).